The sequence spans 393 residues: UDP-glucose 6-dehydrogenase (393 aa).

6 residues coordinate NAD(+): Val11, Asp31, Lys36, Thr85, Thr120, and Glu147. Residues 143–147 (EFLRE), Lys199, Asn203, 244–248 (YNNPS), and Gly252 each bind substrate. Tyr254 contributes to the NAD(+) binding site. The active-site Nucleophile is Cys255. An NAD(+)-binding site is contributed by Lys258. Lys309 lines the substrate pocket. Residue Arg316 participates in NAD(+) binding.

The protein belongs to the UDP-glucose/GDP-mannose dehydrogenase family. Homodimer.

The enzyme catalyses UDP-alpha-D-glucose + 2 NAD(+) + H2O = UDP-alpha-D-glucuronate + 2 NADH + 3 H(+). It participates in nucleotide-sugar biosynthesis; UDP-alpha-D-glucuronate biosynthesis; UDP-alpha-D-glucuronate from UDP-alpha-D-glucose: step 1/1. Its pathway is capsule biogenesis; capsule polysaccharide biosynthesis. In terms of biological role, catalyzes the formation of UDP-glucuronic acid which is required for capsular polysaccharide synthesis. Does not catalyze the formation of glucuronamide moiety of the capsular polysaccharide. This chain is UDP-glucose 6-dehydrogenase, found in Campylobacter jejuni subsp. jejuni serotype O:2 (strain ATCC 700819 / NCTC 11168).